The primary structure comprises 484 residues: NADH-ubiquinone oxidoreductase chain 4 (484 aa).

Transmembrane regions (helical) follow at residues Met1–Gly21, Leu33–Asp53, Val77–Leu97, Tyr109–Asp129, Ile130–Ile150, Phe162–Ile182, Leu206–Val226, Pro236–Met256, Phe270–Leu290, Phe295–Phe315, Leu326–Val346, Tyr365–Leu385, Val405–Tyr425, and Phe448–Ile468.

It belongs to the complex I subunit 4 family.

It localises to the mitochondrion inner membrane. The catalysed reaction is a ubiquinone + NADH + 5 H(+)(in) = a ubiquinol + NAD(+) + 4 H(+)(out). Its function is as follows. Core subunit of the mitochondrial membrane respiratory chain NADH dehydrogenase (Complex I) that is believed to belong to the minimal assembly required for catalysis. Complex I functions in the transfer of electrons from NADH to the respiratory chain. The immediate electron acceptor for the enzyme is believed to be ubiquinone. This chain is NADH-ubiquinone oxidoreductase chain 4 (ND4), found in Mycosarcoma maydis (Corn smut fungus).